The primary structure comprises 860 residues: Glucans biosynthesis glucosyltransferase H (860 aa).

A run of 6 helical transmembrane segments spans residues 146-166 (ILLI…KGIL), 200-220 (ILLL…TALM), 519-539 (VFLT…FLVL), 576-596 (LFST…ILIW), 610-630 (TVSM…RMLF), and 686-706 (FLWW…VSVI).

Belongs to the glycosyltransferase 2 family. OpgH subfamily.

Its subcellular location is the cell inner membrane. It functions in the pathway glycan metabolism; osmoregulated periplasmic glucan (OPG) biosynthesis. Its function is as follows. Involved in the biosynthesis of osmoregulated periplasmic glucans (OPGs). In Pseudomonas syringae pv. syringae (strain B728a), this protein is Glucans biosynthesis glucosyltransferase H.